Here is a 96-residue protein sequence, read N- to C-terminus: Co-chaperonin GroES (96 aa).

Belongs to the GroES chaperonin family. In terms of assembly, heptamer of 7 subunits arranged in a ring. Interacts with the chaperonin GroEL.

Its subcellular location is the cytoplasm. Its function is as follows. Together with the chaperonin GroEL, plays an essential role in assisting protein folding. The GroEL-GroES system forms a nano-cage that allows encapsulation of the non-native substrate proteins and provides a physical environment optimized to promote and accelerate protein folding. GroES binds to the apical surface of the GroEL ring, thereby capping the opening of the GroEL channel. The sequence is that of Co-chaperonin GroES from Actinobacillus pleuropneumoniae serotype 7 (strain AP76).